Here is a 125-residue protein sequence, read N- to C-terminus: MKLFTTLSASLIFIHSLGSTRAAPVTGDESSVEIPEESLIGFLDLAGDDISVFPVSNETHYGLMLVNSTIVNLARSESANFKGKREADAEPWHWLSFSKGEPMYKREADAEPWHWLSFSKGEPMY.

The N-terminal stretch at Met1 to Ala22 is a signal peptide. 2 N-linked (GlcNAc...) asparagine glycosylation sites follow: Asn57 and Asn67.

This is Mating factor alpha from Lachancea kluyveri (Yeast).